A 168-amino-acid polypeptide reads, in one-letter code: Large ribosomal subunit protein uL5 (168 aa).

The protein belongs to the universal ribosomal protein uL5 family. As to quaternary structure, part of the 50S ribosomal subunit; contacts the 5S rRNA and probably tRNA. Forms a bridge to the 30S subunit in the 70S ribosome.

This is one of the proteins that bind and probably mediate the attachment of the 5S RNA into the large ribosomal subunit, where it forms part of the central protuberance. In the 70S ribosome it contacts protein S13 of the 30S subunit (bridge B1b), connecting the 2 subunits; this bridge is implicated in subunit movement. May contact the P site tRNA; the 5S rRNA and some of its associated proteins might help stabilize positioning of ribosome-bound tRNAs. This is Large ribosomal subunit protein uL5 from Methanosphaera stadtmanae (strain ATCC 43021 / DSM 3091 / JCM 11832 / MCB-3).